The primary structure comprises 461 residues: Glycine--tRNA ligase (461 aa).

2 residues coordinate substrate: R100 and E163. ATP contacts are provided by residues 195–197, 205–210, 282–283, and 326–329; these read RNE, FRTREF, EL, and GLGR. Residue 210–214 coordinates substrate; it reads FEQME. 322 to 326 lines the substrate pocket; that stretch reads EPAAG.

Belongs to the class-II aminoacyl-tRNA synthetase family. Homodimer.

It is found in the cytoplasm. The catalysed reaction is tRNA(Gly) + glycine + ATP = glycyl-tRNA(Gly) + AMP + diphosphate. Functionally, catalyzes the attachment of glycine to tRNA(Gly). The chain is Glycine--tRNA ligase from Corynebacterium glutamicum (strain ATCC 13032 / DSM 20300 / JCM 1318 / BCRC 11384 / CCUG 27702 / LMG 3730 / NBRC 12168 / NCIMB 10025 / NRRL B-2784 / 534).